The chain runs to 461 residues: Coagulation factor IX (461 aa).

The first 28 residues, 1-28 (MQRVNMIMAESPGLITICLLGYLLSAEC), serve as a signal peptide directing secretion. A propeptide spanning residues 29–46 (TVFLDHENANKILNRPKR) is cleaved from the precursor. Residues Y47, N48, E53, E54, E61, E63, E66, E67, E72, E73, and E76 each contribute to the Ca(2+) site. One can recognise a Gla domain in the interval 47–92 (YNSGKLEEFVQGNLERECMEEKCSFEEAREVFENTERTTEFWKQYV). 4-carboxyglutamate occurs at positions 53, 54, 61, 63, 66, 67, 72, 73, 76, 79, and 82. E61 lines the Mg(2+) pocket. The cysteines at positions 64 and 69 are disulfide-linked. E66 serves as a coordination point for Mg(2+). E72 lines the Mg(2+) pocket. Residue E76 participates in Mg(2+) binding. E82 provides a ligand contact to Ca(2+). E82 lines the Mg(2+) pocket. An O-linked (GalNAc...) threonine glycan is attached at T85. Positions 86, 93, 94, and 96 each coordinate Ca(2+). 4-carboxyglutamate is present on E86. E86 lines the Mg(2+) pocket. An EGF-like 1; calcium-binding domain is found at 93-129 (DGDQCESNPCLNGGSCKDDINSYECWCPFGFEGKNCE). Intrachain disulfides connect C97-C108, C102-C117, C119-C128, C134-C145, C141-C155, C157-C170, C178-C335, C252-C268, C382-C396, and C407-C435. O-linked (Glc...) serine glycosylation is present at S99. S107 carries O-linked (Fuc...) serine glycosylation. Residues D110 and D111 each contribute to the Ca(2+) site. D110 carries the (3R)-3-hydroxyaspartate modification. Position 114 is a phosphoserine (S114). Positions 130-171 (LDVTCNIKNGRCEQFCKNSADNKVVCSCTEGYRLAENQKSCE) constitute an EGF-like 2 domain. A propeptide spans 192 to 226 (AETVFPDVDYVNSTEAETILDNITQSTQSFNDFTR) (activation peptide). Y201 carries the post-translational modification Sulfotyrosine. A glycan (N-linked (GlcNAc...) asparagine) is linked at N203. Residue S204 is modified to Phosphoserine. T205 is subject to Phosphothreonine; alternate. T205 carries an O-linked (GalNAc...) threonine; alternate glycan. N213 is a glycosylation site (N-linked (GlcNAc...) asparagine). T215 and T225 each carry an O-linked (GalNAc...) threonine glycan. The 233-residue stretch at 227–459 (VVGGEDAKPG…YVNWIKEKTK (233 aa)) folds into the Peptidase S1 domain. Residue H267 is the Charge relay system of the active site. Ca(2+) contacts are provided by E281, N283, E286, E288, and E291. D315 functions as the Charge relay system in the catalytic mechanism. The active-site Charge relay system is the S411.

This sequence belongs to the peptidase S1 family. As to quaternary structure, heterodimer of a light chain and a heavy chain; disulfide-linked. Interacts (inactive and activated) with F11 (activated) in calcium-dependent manner. Interacts with SERPINC1. Interacts (activated) with iripin-8, a serine protease inhibitor from Ixodes ricinus saliva. Interacts (inactive and activated) with nitrophorin-2, an anticoagulant protein from Rhodnius prolixus. Activated by factor XIa, which excises the activation peptide. The propeptide can also be removed by snake venom protease. Activated by coagulation factor VIIa-tissue factor (F7-F3) complex in calcium-dependent manner. Post-translationally, the iron and 2-oxoglutarate dependent 3-hydroxylation of aspartate and asparagine is (R) stereospecific within EGF domains. In terms of tissue distribution, detected in blood plasma (at protein level). Synthesized primarily in the liver and secreted in plasma.

It localises to the secreted. The catalysed reaction is Selective cleavage of Arg-|-Ile bond in factor X to form factor Xa.. Its function is as follows. Factor IX is a vitamin K-dependent plasma protein that participates in the intrinsic pathway of blood coagulation by converting factor X to its active form in the presence of Ca(2+) ions, phospholipids, and factor VIIIa. The polypeptide is Coagulation factor IX (F9) (Homo sapiens (Human)).